Consider the following 86-residue polypeptide: Toxin Td2 (86 aa).

Positions 1-20 (MTRFVLFLNCFFLICMVVEC) are cleaved as a signal peptide. The LCN-type CS-alpha/beta domain occupies 21–83 (KEGYLMGADG…TWDRATNTCG (63 aa)). 4 disulfides stabilise this stretch: Cys-31-Cys-82, Cys-35-Cys-57, Cys-43-Cys-63, and Cys-47-Cys-65. At Arg-84 the chain carries Arginine amide.

Expressed by the venom gland.

The protein localises to the secreted. Beta toxins bind voltage-independently at site-4 of sodium channels (Nav) and shift the voltage of activation toward more negative potentials thereby affecting sodium channel activation and promoting spontaneous and repetitive firing. The polypeptide is Toxin Td2 (Tityus discrepans (Venezuelan scorpion)).